Here is a 202-residue protein sequence, read N- to C-terminus: Outer-membrane lipoprotein carrier protein (202 aa).

An N-terminal signal peptide occupies residues 1 to 21; it reads MKRLLVACCFLSGLISASALA.

The protein belongs to the LolA family. As to quaternary structure, monomer.

The protein resides in the periplasm. Functionally, participates in the translocation of lipoproteins from the inner membrane to the outer membrane. Only forms a complex with a lipoprotein if the residue after the N-terminal Cys is not an aspartate (The Asp acts as a targeting signal to indicate that the lipoprotein should stay in the inner membrane). In Yersinia pestis bv. Antiqua (strain Antiqua), this protein is Outer-membrane lipoprotein carrier protein.